The sequence spans 261 residues: Hemin import ATP-binding protein HmuV (261 aa).

Residues 7–243 (LRGQNLSLQF…EIIDAVYGYK (237 aa)) form the ABC transporter domain. An ATP-binding site is contributed by 39-46 (GPNGAGKS).

This sequence belongs to the ABC transporter superfamily. Heme (hemin) importer (TC 3.A.1.14.5) family. The complex is composed of two ATP-binding proteins (HmuV), two transmembrane proteins (HmuU) and a solute-binding protein (HmuT).

Its subcellular location is the cell inner membrane. In terms of biological role, part of the ABC transporter complex HmuTUV involved in hemin import. Responsible for energy coupling to the transport system. This chain is Hemin import ATP-binding protein HmuV, found in Vibrio vulnificus (strain YJ016).